Consider the following 267-residue polypeptide: 2-keto-3-deoxy-L-rhamnonate aldolase (267 aa).

The Proton acceptor role is filled by H49. Residue Q151 participates in substrate binding. E153 lines the Mg(2+) pocket. Substrate contacts are provided by A178 and D179. D179 is a binding site for Mg(2+).

Belongs to the HpcH/HpaI aldolase family. KDR aldolase subfamily. Homohexamer. The cofactor is Mg(2+). Ni(2+) serves as cofactor.

It catalyses the reaction 2-dehydro-3-deoxy-L-rhamnonate = (S)-lactaldehyde + pyruvate. The enzyme catalyses D-glyceraldehyde + 3-hydroxypyruvate = (3R,4S,5R)-3,4,5,6-tetrahydroxy-2-oxohexanoate. The catalysed reaction is D-glyceraldehyde + 3-hydroxypyruvate = 2-dehydro-D-gluconate. It carries out the reaction D-glyceraldehyde + 3-hydroxypyruvate = 2-dehydro-D-galactonate. It catalyses the reaction D-glyceraldehyde + pyruvate = 2-dehydro-3-deoxy-L-galactonate. The enzyme catalyses 2-dehydro-3-deoxy-D-gluconate = D-glyceraldehyde + pyruvate. In terms of biological role, catalyzes the reversible retro-aldol cleavage of 2-keto-3-deoxy-L-rhamnonate (KDR) to pyruvate and lactaldehyde. 2-keto-3-deoxy-L-mannonate, 2-keto-3-deoxy-L-lyxonate and 4-hydroxy-2-ketoheptane-1,7-dioate (HKHD) are also reasonably good substrates, although 2-keto-3-deoxy-L-rhamnonate is likely to be the physiological substrate. In vitro, can catalyze the aldolisation reaction between hydroxypyruvate (HPA) or pyruvate (PA) and D-glyceraldehyde (D-GA). The condensation of hydroxypyruvate and D-glyceraldehyde produces (3R,4S,5R)-3,4,5,6-tetrahydroxy-2-oxohexanoate as the major product, 2-dehydro-D-gluconate and 2-dehydro-D-galactonate. The condensation of pyruvate and D-glyceraldehyde produces 2-dehydro-3-deoxy-L-galactonate as the major product and 2-dehydro-3-deoxy-D-gluconate. This Escherichia coli (strain K12) protein is 2-keto-3-deoxy-L-rhamnonate aldolase (rhmA).